Here is a 139-residue protein sequence, read N- to C-terminus: D-ribose pyranase (139 aa).

The active-site Proton donor is H20. Residues D28, H106, and 128 to 130 (YAN) each bind substrate.

It belongs to the RbsD / FucU family. RbsD subfamily. As to quaternary structure, homodecamer.

It is found in the cytoplasm. The enzyme catalyses beta-D-ribopyranose = beta-D-ribofuranose. It participates in carbohydrate metabolism; D-ribose degradation; D-ribose 5-phosphate from beta-D-ribopyranose: step 1/2. In terms of biological role, catalyzes the interconversion of beta-pyran and beta-furan forms of D-ribose. The polypeptide is D-ribose pyranase (Escherichia coli (strain 55989 / EAEC)).